Reading from the N-terminus, the 393-residue chain is Formate-dependent phosphoribosylglycinamide formyltransferase (393 aa).

N(1)-(5-phospho-beta-D-ribosyl)glycinamide contacts are provided by residues 22-23 (EL) and Glu-82. ATP is bound by residues Arg-114, Lys-155, 160 to 165 (SSGKGQ), 195 to 198 (EGFI), and Glu-203. One can recognise an ATP-grasp domain in the interval 119–308 (RLAAEELGLP…EFALHARAIL (190 aa)). The Mg(2+) site is built by Glu-267 and Glu-279. N(1)-(5-phospho-beta-D-ribosyl)glycinamide-binding positions include Asp-286, Lys-356, and 363-364 (RR).

This sequence belongs to the PurK/PurT family. Homodimer.

The enzyme catalyses N(1)-(5-phospho-beta-D-ribosyl)glycinamide + formate + ATP = N(2)-formyl-N(1)-(5-phospho-beta-D-ribosyl)glycinamide + ADP + phosphate + H(+). Its pathway is purine metabolism; IMP biosynthesis via de novo pathway; N(2)-formyl-N(1)-(5-phospho-D-ribosyl)glycinamide from N(1)-(5-phospho-D-ribosyl)glycinamide (formate route): step 1/1. In terms of biological role, involved in the de novo purine biosynthesis. Catalyzes the transfer of formate to 5-phospho-ribosyl-glycinamide (GAR), producing 5-phospho-ribosyl-N-formylglycinamide (FGAR). Formate is provided by PurU via hydrolysis of 10-formyl-tetrahydrofolate. This chain is Formate-dependent phosphoribosylglycinamide formyltransferase, found in Azotobacter vinelandii (strain DJ / ATCC BAA-1303).